Here is a 96-residue protein sequence, read N- to C-terminus: UPF0235 protein Sputcn32_2690 (96 aa).

It belongs to the UPF0235 family.

The chain is UPF0235 protein Sputcn32_2690 from Shewanella putrefaciens (strain CN-32 / ATCC BAA-453).